Reading from the N-terminus, the 734-residue chain is Casein kinase II subunit alpha'-interacting protein (734 aa).

Residues 608–654 (SLLPSTSSSTSSSSTTSSSSSVASASSDSSSSSSSSSSFSISSSSSP) are disordered. The segment covering 612–654 (STSSSTSSSSTTSSSSSVASASSDSSSSSSSSSSFSISSSSSP) has biased composition (low complexity).

Interacts (via C-terminus) with CSNK2A2. Post-translationally, phosphorylated by CK2 (casein kinase II), specifically by complexes containing catalytic subunit CSNK2A2.

The protein resides in the nucleus. May play a role in chromatin regulation of male germ cells. The chain is Casein kinase II subunit alpha'-interacting protein from Homo sapiens (Human).